The sequence spans 615 residues: Sodium-dependent neutral amino acid transporter B(0)AT3 (615 aa).

Residues 1–26 (MAQASGMDPLVDIEDERPKWDNKLQY) are Cytoplasmic-facing. A helical transmembrane segment spans residues 27-47 (LLSCIGFAVGLGNIWRFPYLC). Over 48-52 (HTHGG) the chain is Extracellular. The helical transmembrane segment at 53-73 (GAFLIPYFIALVFEGIPLFYI) threads the bilayer. At 74–105 (ELAIGQRLRRGSIGVWKTISPYLGGVGLGCFS) the chain is on the cytoplasmic side. A helical transmembrane segment spans residues 106 to 126 (VSFLVSLYYNTILLWVLWFFL). At 127-177 (NSFQHPLPWSTCPLDLNRTGFVQECQSSGTVSYFWYRQTLNITSDISNTGT) the chain is on the extracellular side. N-linked (GlcNAc...) asparagine glycans are attached at residues Asn143 and Asn167. The helical transmembrane segment at 178–198 (IQWKLFLCLVACWTTVYLCVI) threads the bilayer. The Cytoplasmic segment spans residues 199–206 (RGIESTGK). The chain crosses the membrane as a helical span at residues 207-227 (VIYFTALFPYLVLTIFLIRGL). The Extracellular segment spans residues 228-255 (TLPGATEGLTYLFTPNMKILQNSRVWLD). Residues 256–276 (AATQIFFSLSLAFGGHIAFAS) traverse the membrane as a helical segment. The Cytoplasmic segment spans residues 277 to 290 (YNQPRNNCEKDAVT). Residues 291 to 311 (IALVNSMTSLYASITIFSIMG) traverse the membrane as a helical segment. At 312–397 (FKASNDYGRC…FTEAVLHMPG (86 aa)) the chain is on the extracellular side. An N-linked (GlcNAc...) asparagine glycan is attached at Asn353. The chain crosses the membrane as a helical span at residues 398–418 (ASVWSVLFFGMLFTLGLSSMF). Topologically, residues 419 to 442 (GNMEGVITPLFDMGILPKGVPKET) are cytoplasmic. Residues 443–463 (MTGVVCFICFLSAICFTLQSG) form a helical membrane-spanning segment. The Extracellular portion of the chain corresponds to 464 to 472 (SYWLEIFDS). A helical membrane pass occupies residues 473-493 (FAASLNLIIFAFMEVVGVIHV). The Cytoplasmic segment spans residues 494–520 (YGIKRFCDDIEWMTGRRPSLYWQVTWR). The chain crosses the membrane as a helical span at residues 521-541 (VVSPMLLFGIFLSYIVLLAQS). The Extracellular portion of the chain corresponds to 542–571 (SPSYKAWNPQYEHFPSREEKLYPGWVQVTC). Residues 572 to 592 (VLLSFLPSLWVPGIALAQLLF) form a helical membrane-spanning segment. The Cytoplasmic segment spans residues 593-615 (QYRQRWKNTHLESALKPQESRGC).

This sequence belongs to the sodium:neurotransmitter symporter (SNF) (TC 2.A.22) family. SLC6A18 subfamily. Interacts with CLTRN; this interaction regulates the trafficking of SLC6A18 to the cell membrane and its activity. Kidney-specific expression.

The protein resides in the apical cell membrane. The protein localises to the cell membrane. The enzyme catalyses L-alanine(out) + chloride(out) + 2 Na(+)(out) = L-alanine(in) + chloride(in) + 2 Na(+)(in). The catalysed reaction is glycine(out) + chloride(out) + 2 Na(+)(out) = glycine(in) + chloride(in) + 2 Na(+)(in). It catalyses the reaction L-methionine(out) + chloride(out) + 2 Na(+)(out) = L-methionine(in) + chloride(in) + 2 Na(+)(in). It carries out the reaction L-valine(out) + chloride(out) + 2 Na(+)(out) = L-valine(in) + chloride(in) + 2 Na(+)(in). The enzyme catalyses L-isoleucine(out) + chloride(out) + 2 Na(+)(out) = L-isoleucine(in) + chloride(in) + 2 Na(+)(in). The catalysed reaction is L-serine(out) + chloride(out) + 2 Na(+)(out) = L-serine(in) + chloride(in) + 2 Na(+)(in). It catalyses the reaction L-leucine(out) + chloride(out) + 2 Na(+)(out) = L-leucine(in) + chloride(in) + 2 Na(+)(in). In terms of biological role, symporter that transports one amino acid molecule together with two sodium and one chloride ions in kidneys and plays a role in the neutral amino acids reabsorption. Preferentially transports neutral amino acids such as L-glycine and L-alanine but also other neutral amino acids. Required CLTRN for cell surface expression and for its amino acid transporter activity. The transport mechanism is pH-independent. This chain is Sodium-dependent neutral amino acid transporter B(0)AT3, found in Rattus norvegicus (Rat).